Here is a 556-residue protein sequence, read N- to C-terminus: Formate--tetrahydrofolate ligase (556 aa).

65–72 (TPAGEGKS) is a binding site for ATP.

Belongs to the formate--tetrahydrofolate ligase family.

The catalysed reaction is (6S)-5,6,7,8-tetrahydrofolate + formate + ATP = (6R)-10-formyltetrahydrofolate + ADP + phosphate. It functions in the pathway one-carbon metabolism; tetrahydrofolate interconversion. This Clostridium perfringens (strain SM101 / Type A) protein is Formate--tetrahydrofolate ligase.